We begin with the raw amino-acid sequence, 259 residues long: Imidazole glycerol phosphate synthase subunit HisF (259 aa).

Active-site residues include aspartate 11 and aspartate 130.

The protein belongs to the HisA/HisF family. Heterodimer of HisH and HisF.

It is found in the cytoplasm. It catalyses the reaction 5-[(5-phospho-1-deoxy-D-ribulos-1-ylimino)methylamino]-1-(5-phospho-beta-D-ribosyl)imidazole-4-carboxamide + L-glutamine = D-erythro-1-(imidazol-4-yl)glycerol 3-phosphate + 5-amino-1-(5-phospho-beta-D-ribosyl)imidazole-4-carboxamide + L-glutamate + H(+). The protein operates within amino-acid biosynthesis; L-histidine biosynthesis; L-histidine from 5-phospho-alpha-D-ribose 1-diphosphate: step 5/9. In terms of biological role, IGPS catalyzes the conversion of PRFAR and glutamine to IGP, AICAR and glutamate. The HisF subunit catalyzes the cyclization activity that produces IGP and AICAR from PRFAR using the ammonia provided by the HisH subunit. The chain is Imidazole glycerol phosphate synthase subunit HisF from Desulfosudis oleivorans (strain DSM 6200 / JCM 39069 / Hxd3) (Desulfococcus oleovorans).